We begin with the raw amino-acid sequence, 505 residues long: Flagellin (505 aa).

It belongs to the bacterial flagellin family.

It is found in the secreted. The protein localises to the bacterial flagellum. Functionally, flagellin is the subunit protein which polymerizes to form the filaments of bacterial flagella. The sequence is that of Flagellin (fliC) from Salmonella senftenberg.